A 185-amino-acid polypeptide reads, in one-letter code: V-type ATP synthase subunit E (185 aa).

It belongs to the V-ATPase E subunit family.

Functionally, produces ATP from ADP in the presence of a proton gradient across the membrane. The chain is V-type ATP synthase subunit E from Deinococcus geothermalis (strain DSM 11300 / CIP 105573 / AG-3a).